The primary structure comprises 507 residues: MNLLDPFMKMTDEQEKGLSGAPSPTMSEDSAGSPCPSGSGSDTENTRPQENTFPKGEPDLKKESEEDKFPVCIREAVSQVLKGYDWTLVPMPVRVNGSSKNKPHVKRPMNAFMVWAQAARRKLADQYPHLHNAELSKTLGKLWRLLNESEKRPFVEEAERLRVQHKKDHPDYKYQPRRRKSVKNGQAEAEEATEQTHISPNAIFKALQADSPHSSSGMSEVHSPGEHSGQSQGPPTPPTTPKTDVQAGKVDLKREGRPLAEGGRQPPIDFRDVDIGELSSDVISNIETFDVNEFDQYLPPNGHPGVPATHGQVTYTGSYGISSTAPTPATAGHVWMSKQQAPPPPPQQPPQAPQAPQAPPQQQAPPQQPQAPQQQQAHTLTTLSSEPGQSQRTHIKTEQLSPSHYSEQQQHSPQQISYSPFNLPHYSPSYPPITRSQYDYADHQNSGSYYSHAAGQGSGLYSTFTYMNPAQRPMYTPIADTSGVPSIPQTHSPQHWEQPVYTQLTRP.

Disordered regions lie at residues 1-67 (MNLL…SEED) and 160-250 (RLRV…AGKV). Positions 30 to 41 (SAGSPCPSGSGS) are enriched in low complexity. The span at 42-52 (DTENTRPQENT) shows a compositional bias: polar residues. Composition is skewed to basic and acidic residues over residues 56 to 67 (GEPDLKKESEED) and 160 to 174 (RLRVQHKKDHPDYKY). A dimerization (DIM) region spans residues 63–103 (ESEEDKFPVCIREAVSQVLKGYDWTLVPMPVRVNGSSKNKP). The segment at 63-103 (ESEEDKFPVCIREAVSQVLKGYDWTLVPMPVRVNGSSKNKP) is PQA. Ser64 bears the Phosphoserine; by PKA mark. The HMG box DNA-binding region spans 105 to 173 (VKRPMNAFMV…QHKKDHPDYK (69 aa)). Phosphoserine; by PKA is present on Ser211. Residues 224 to 307 (PGEHSGQSQG…LPPNGHPGVP (84 aa)) are transactivation domain (TAM). 2 consecutive short sequence motifs (9aaTAD) follow at residues 275–284 (IGELSSDVIS) and 290–298 (DVNEFDQYL). Positions 335–429 (WMSKQQAPPP…PFNLPHYSPS (95 aa)) are disordered. Pro residues predominate over residues 341–369 (APPPPPQQPPQAPQAPQAPPQQQAPPQQP). The segment covering 378-420 (HTLTTLSSEPGQSQRTHIKTEQLSPSHYSEQQQHSPQQISYSP) has biased composition (polar residues). Residues 392–507 (RTHIKTEQLS…QPVYTQLTRP (116 aa)) form a transactivation domain (TAC) region. Residue Lys396 forms a Glycyl lysine isopeptide (Lys-Gly) (interchain with G-Cter in ubiquitin) linkage. The 9aaTAD 3 motif lies at 458–466 (SGLYSTFTY). The interval 477-507 (PIADTSGVPSIPQTHSPQHWEQPVYTQLTRP) is disordered. A compositionally biased stretch (polar residues) spans 483–507 (GVPSIPQTHSPQHWEQPVYTQLTRP).

As to quaternary structure, homodimer; homodimerization is required for activity. Interacts (via C-terminus) with ZNF219; forming a complex that binds to the COL2A1 promoter and activates COL2A1 expression. Interacts with DDRGK1. Interacts with EP300/p300. Interacts with beta-catenin (CTNNB1); inhibiting CTNNB1 activity by competing with the binding sites of TCF/LEF within CTNNB1. Acetylated; acetylation impairs nuclear localization and ability to transactivate expression of target genes. Deacetylated by SIRT1. In terms of processing, phosphorylation at Ser-64 and Ser-211 by PKA increases transcriptional activity and may help delay chondrocyte maturation downstream of PTHLH/PTHrP signaling. Phosphorylation at either Ser-64 or Ser-211 is required for sumoylation, but phosphorylation is not dependent on sumoylation. Phosphorylated on tyrosine residues; tyrosine dephosphorylation by PTPN11/SHP2 blocks SOX9 phosphorylation by PKA and subsequent SUMOylation. Post-translationally, sumoylated; phosphorylation at either Ser-64 or Ser-211 is required for sumoylation. Sumoylation is induced by BMP signaling pathway. Ubiquitinated; ubiquitination leads to proteasomal degradation and is negatively regulated by DDRGK1. In terms of tissue distribution, expressed in the intestinal epithelium (at protein level). Expressed in progenitor cells in various organs, including chondroprogenitors, osteoprogenitors and preadipocytes, but is not expressed in most differentiated cell types such as osteoblasts and adipocytes, with the exception of chondrocytes. Highly expressed in developing chondrogenic tissues. Also expressed in some non-chondrogenic tissues such as notochord, otic vesicle and neural tube.

The protein resides in the nucleus. Its function is as follows. Transcription factor that plays a key role in chondrocytes differentiation and skeletal development. Specifically binds the 5'-ACAAAG-3' DNA motif present in enhancers and super-enhancers and promotes expression of genes important for chondrogenesis, including cartilage matrix protein-coding genes COL2A1, COL4A2, COL9A1, COL11A2 and ACAN, SOX5 and SOX6. Also binds to some promoter regions. Plays a central role in successive steps of chondrocyte differentiation. Absolutely required for precartilaginous condensation, the first step in chondrogenesis during which skeletal progenitors differentiate into prechondrocytes. Together with SOX5 and SOX6, required for overt chondrogenesis when condensed prechondrocytes differentiate into early stage chondrocytes, the second step in chondrogenesis. Later, required to direct hypertrophic maturation and block osteoblast differentiation of growth plate chondrocytes: maintains chondrocyte columnar proliferation, delays prehypertrophy and then prevents osteoblastic differentiation of chondrocytes by lowering beta-catenin (CTNNB1) signaling and RUNX2 expression. Also required for chondrocyte hypertrophy, both indirectly, by keeping the lineage fate of chondrocytes, and directly, by remaining present in upper hypertrophic cells and transactivating COL10A1 along with MEF2C. Low lipid levels are the main nutritional determinant for chondrogenic commitment of skeletal progenitor cells: when lipids levels are low, FOXO (FOXO1 and FOXO3) transcription factors promote expression of SOX9, which induces chondrogenic commitment and suppresses fatty acid oxidation. Mechanistically, helps, but is not required, to remove epigenetic signatures of transcriptional repression and deposit active promoter and enhancer marks at chondrocyte-specific genes. Acts in cooperation with the Hedgehog pathway-dependent GLI (GLI1 and GLI3) transcription factors. In addition to cartilage development, also acts as a regulator of proliferation and differentiation in epithelial stem/progenitor cells: involved in the lung epithelium during branching morphogenesis, by balancing proliferation and differentiation and regulating the extracellular matrix. Controls epithelial branching during kidney development. This Mus musculus (Mouse) protein is Transcription factor SOX-9.